The sequence spans 154 residues: Prefoldin subunit 5 (154 aa).

An N-acetylalanine modification is found at A2. K42 carries the post-translational modification N6-acetyllysine. S56 carries the post-translational modification Phosphoserine.

This sequence belongs to the prefoldin subunit alpha family. Heterohexamer of two PFD-alpha type and four PFD-beta type subunits. Binds to MYC; interacts with its N-terminal domain. In terms of tissue distribution, highly expressed in pancreas and skeletal muscle and moderately in other tissues.

It localises to the nucleus. The protein resides in the cytoplasm. Its function is as follows. Binds specifically to cytosolic chaperonin (c-CPN) and transfers target proteins to it. Binds to nascent polypeptide chain and promotes folding in an environment in which there are many competing pathways for nonnative proteins. Represses the transcriptional activity of MYC. This Homo sapiens (Human) protein is Prefoldin subunit 5 (PFDN5).